Reading from the N-terminus, the 483-residue chain is Cobyric acid synthase (483 aa).

Positions 252–430 (ALQVVAVAYP…LHRLFDSGPF (179 aa)) constitute a GATase cobBQ-type domain. Residue Cys333 is the Nucleophile of the active site. The active site involves His422.

The protein belongs to the CobB/CobQ family. CobQ subfamily.

It functions in the pathway cofactor biosynthesis; adenosylcobalamin biosynthesis. Catalyzes amidations at positions B, D, E, and G on adenosylcobyrinic A,C-diamide. NH(2) groups are provided by glutamine, and one molecule of ATP is hydrogenolyzed for each amidation. In Halorhodospira halophila (strain DSM 244 / SL1) (Ectothiorhodospira halophila (strain DSM 244 / SL1)), this protein is Cobyric acid synthase.